Here is a 121-residue protein sequence, read N- to C-terminus: Small ribosomal subunit protein uS13 (121 aa).

Residues 91 to 121 (HRMSLPVRGQRTRTNARTRRGSRKTVAGRKK) are disordered. Basic residues predominate over residues 100-121 (QRTRTNARTRRGSRKTVAGRKK).

It belongs to the universal ribosomal protein uS13 family. In terms of assembly, part of the 30S ribosomal subunit. Forms a loose heterodimer with protein S19. Forms two bridges to the 50S subunit in the 70S ribosome.

In terms of biological role, located at the top of the head of the 30S subunit, it contacts several helices of the 16S rRNA. In the 70S ribosome it contacts the 23S rRNA (bridge B1a) and protein L5 of the 50S subunit (bridge B1b), connecting the 2 subunits; these bridges are implicated in subunit movement. Contacts the tRNAs in the A and P-sites. The sequence is that of Small ribosomal subunit protein uS13 from Prochlorococcus marinus (strain MIT 9312).